A 127-amino-acid chain; its full sequence is Large ribosomal subunit protein bL12 (127 aa).

The segment at 96 to 127 is disordered; that stretch reads GTPSTLKEAVSKDDAEEAAKQLKEAGAEVEVK. The segment covering 104-127 has biased composition (basic and acidic residues); it reads AVSKDDAEEAAKQLKEAGAEVEVK.

Belongs to the bacterial ribosomal protein bL12 family. Homodimer. Part of the ribosomal stalk of the 50S ribosomal subunit. Forms a multimeric L10(L12)X complex, where L10 forms an elongated spine to which 2 to 4 L12 dimers bind in a sequential fashion. Binds GTP-bound translation factors.

Functionally, forms part of the ribosomal stalk which helps the ribosome interact with GTP-bound translation factors. Is thus essential for accurate translation. In Oleidesulfovibrio alaskensis (strain ATCC BAA-1058 / DSM 17464 / G20) (Desulfovibrio alaskensis), this protein is Large ribosomal subunit protein bL12.